We begin with the raw amino-acid sequence, 401 residues long: S-adenosylmethionine synthase (401 aa).

ATP is bound at residue 137–142 (GEGSGD). Positions 272–305 (GTSAEQGDDGSVGRGNRSNGLITPNRSMSMEATS) are disordered. Polar residues predominate over residues 287-305 (NRSNGLITPNRSMSMEATS).

The protein belongs to the AdoMet synthase 2 family. The cofactor is Mg(2+).

It carries out the reaction L-methionine + ATP + H2O = S-adenosyl-L-methionine + phosphate + diphosphate. It participates in amino-acid biosynthesis; S-adenosyl-L-methionine biosynthesis; S-adenosyl-L-methionine from L-methionine: step 1/1. Functionally, catalyzes the formation of S-adenosylmethionine from methionine and ATP. This is S-adenosylmethionine synthase from Natronomonas pharaonis (strain ATCC 35678 / DSM 2160 / CIP 103997 / JCM 8858 / NBRC 14720 / NCIMB 2260 / Gabara) (Halobacterium pharaonis).